A 177-amino-acid polypeptide reads, in one-letter code: Large ribosomal subunit protein uL5m (177 aa).

This sequence belongs to the universal ribosomal protein uL5 family.

The protein resides in the mitochondrion. The chain is Large ribosomal subunit protein uL5m (RPL5) from Acanthamoeba castellanii (Amoeba).